The primary structure comprises 431 residues: Elongation factor 1-gamma (431 aa).

Residues 2-84 form the GST N-terminal domain; that stretch reads VKGTLYTYPE…LLANEQLRGG (83 aa). One can recognise a GST C-terminal domain in the interval 86 to 212; that stretch reads CPFVQAQVQQ…YKLCEKALVF (127 aa). Residues 223-261 form a disordered region; the sequence is KTGAAKPQQQAQQQKQEKKPKEKKEAPKKAAEPAEELDA. The segment covering 226–236 has biased composition (low complexity); the sequence is AAKPQQQAQQQ. Positions 237–254 are enriched in basic and acidic residues; that stretch reads KQEKKPKEKKEAPKKAAE. Residues 272–431 enclose the EF-1-gamma C-terminal domain; sequence SKDPFDALPK…RKFNQGKIFK (160 aa). Ser-294 is modified (phosphoserine).

Interacts with microtubules. May interact with BicDR; the interaction is probably indirect. Interacts (via C-terminus) with Doa; the interaction is probably direct, is transient and leads to phosphorylation of eEF1gamma by Doa. EF-1 is composed of four subunits: alpha, beta, delta, and gamma. In terms of processing, phosphorylated on Ser-294 by LAMMER kinases, including Doa. Phosphorylation on Ser-294 by Doa is required for negative regulation of microtubule-based transport.

It localises to the cytoplasm. Its subcellular location is the nucleus. It is found in the cytoskeleton. Its function is as follows. Microtubule binding protein involved in regulation of microtubule-based transport. Probably plays a role in anchoring the EF-1 complex to other cellular components. Probably involved in formation and/or development of mechanosensory organs during metamorphosis. Required for cellular and organismal viability. Not essential for the innate immune response to bacterial infection. The chain is Elongation factor 1-gamma from Drosophila melanogaster (Fruit fly).